A 408-amino-acid chain; its full sequence is MAKDKIVLAYSGGLDTSIILKWLQTERNYDVVCFTADLGQGDEVEEARVKALNTGAVAAYALDLREEFVRDYVFPMFRSSALYEGYYLLGTSIARPLIAKKMVEIAQKEGAVAVSHGATGKGNDQVRFEMTAYALQPDIVTVAPWRDWEFQGRADLEAFAHEHGIPVPTTKKDPWSTDANMLHISYEGGILEDPWAEPPAHMFKLTVAPEEAPDEAEYVEIEFLNGDAVAINGETLSPAALLDRANEIGGRHGVGRVDLVENRFVGMKSRGVYETPGGTLLYHARRAVESLTLDREVLHQRDALGPKYAELVYNGFWFAPEREALQVYMDHVAKAVTGTARLKLYKGNCIVAGRKAERSLYDKDLVSFEAGGDYNQHDAGAFIKLNALRMRVQARVEAKAGQKDKAGD.

ATP contacts are provided by residues 9 to 17 (AYSGGLDTS) and alanine 36. Residues tyrosine 87 and serine 92 each coordinate L-citrulline. Glycine 117 is an ATP binding site. Residues threonine 119, asparagine 123, and aspartate 124 each contribute to the L-aspartate site. Asparagine 123 is an L-citrulline binding site. L-citrulline is bound by residues arginine 127, serine 176, serine 185, glutamate 261, and tyrosine 273.

Belongs to the argininosuccinate synthase family. Type 1 subfamily. Homotetramer.

It localises to the cytoplasm. It catalyses the reaction L-citrulline + L-aspartate + ATP = 2-(N(omega)-L-arginino)succinate + AMP + diphosphate + H(+). It participates in amino-acid biosynthesis; L-arginine biosynthesis; L-arginine from L-ornithine and carbamoyl phosphate: step 2/3. This Deinococcus deserti (strain DSM 17065 / CIP 109153 / LMG 22923 / VCD115) protein is Argininosuccinate synthase.